Reading from the N-terminus, the 287-residue chain is Probable endoribonuclease YicC (287 aa).

Belongs to the YicC/YloC family. The cofactor is a divalent metal cation.

Functionally, probably a ssRNA endonuclease. Its function is as follows. Might contribute to small RNA (sRNA) regulation. This chain is Probable endoribonuclease YicC, found in Salmonella typhimurium (strain LT2 / SGSC1412 / ATCC 700720).